A 308-amino-acid polypeptide reads, in one-letter code: Aspartate carbamoyltransferase catalytic subunit (308 aa).

Residues Arg-59 and Thr-60 each contribute to the carbamoyl phosphate site. Position 87 (Lys-87) interacts with L-aspartate. Residues Arg-109, His-137, and Gln-140 each contribute to the carbamoyl phosphate site. Positions 170 and 224 each coordinate L-aspartate. 2 residues coordinate carbamoyl phosphate: Gly-265 and Pro-266.

Belongs to the aspartate/ornithine carbamoyltransferase superfamily. ATCase family. Heterododecamer (2C3:3R2) of six catalytic PyrB chains organized as two trimers (C3), and six regulatory PyrI chains organized as three dimers (R2).

It catalyses the reaction carbamoyl phosphate + L-aspartate = N-carbamoyl-L-aspartate + phosphate + H(+). The protein operates within pyrimidine metabolism; UMP biosynthesis via de novo pathway; (S)-dihydroorotate from bicarbonate: step 2/3. Its function is as follows. Catalyzes the condensation of carbamoyl phosphate and aspartate to form carbamoyl aspartate and inorganic phosphate, the committed step in the de novo pyrimidine nucleotide biosynthesis pathway. This chain is Aspartate carbamoyltransferase catalytic subunit, found in Flavobacterium psychrophilum (strain ATCC 49511 / DSM 21280 / CIP 103535 / JIP02/86).